We begin with the raw amino-acid sequence, 359 residues long: MSETSPKLRAELEGIPTYKPGKPAAAAGPVAYKLSSNENPYPPLPGVLESVASSVGSFNRYPDMACSGLMSELSERFGVPLSHLATGTGSVGVAQQLLQATSGPGDEVIYAWRSFEAYPIITQVSGATSVQVPLTPGDVHDLDAMADAITDRTRLIFVCNPNNPTGTVVRRAELERFLDRVPSDVLVVLDEAYREFIRDPEVPDGVAIYRERPNVCVLRTFSKAYGLAGLRVGFAIAHEPVAAALRKTAVPFGVSQLAQDAAVASLRAEDELLGRVGALVCERQRVVASLREQGWTVPETQANFVWLRLGERTLDFAAACEQAGVVVRPFAGEGVRVTVGENEANDIFLKVTERFRKEL.

Residue lysine 223 is modified to N6-(pyridoxal phosphate)lysine.

The protein belongs to the class-II pyridoxal-phosphate-dependent aminotransferase family. Homodimer. The cofactor is pyridoxal 5'-phosphate.

The catalysed reaction is an aromatic L-alpha-amino acid + 2-oxoglutarate = an aromatic oxo-acid + L-glutamate. Its function is as follows. Aminotransferase that catalyzes the conversion of aromatic amino acids and 2-oxoglutarate into corresponding aromatic oxo acids and L-glutamate. This Streptomyces avermitilis (strain ATCC 31267 / DSM 46492 / JCM 5070 / NBRC 14893 / NCIMB 12804 / NRRL 8165 / MA-4680) protein is Aromatic amino acid aminotransferase.